A 167-amino-acid chain; its full sequence is Leukotoxin-activating lysine-acyltransferase LktC serotype T3 (167 aa).

Catalysis depends on residues His22 and Asp91.

This sequence belongs to the RTX toxin acyltransferase family.

It localises to the cytoplasm. The enzyme catalyses a fatty acyl-[ACP] + L-lysyl-[protein] = N(6)-(fatty acyl)-L-lysyl-[protein] + holo-[ACP] + H(+). Functionally, involved in fatty acylation of the protoxin (LktA) at two internal lysine residues, thereby converting it to the active toxin. This chain is Leukotoxin-activating lysine-acyltransferase LktC serotype T3 (lktC), found in Mannheimia haemolytica (Pasteurella haemolytica).